Consider the following 773-residue polypeptide: Serine/threonine-protein kinase CBK1 (773 aa).

Polar residues-rich tracts occupy residues 50-59 (LHDQYSSHME) and 178-217 (GNYN…SPQR). 2 disordered regions span residues 50–111 (LHDQ…GGNI) and 177–275 (NGNY…QQQQ). Composition is skewed to low complexity over residues 218–256 (QPAQ…QQQP) and 265–275 (QQTQLQQQQQQ). Residues 370–686 (FHTVQVIGKG…ADEIKSHPFF (317 aa)) form the Protein kinase domain. ATP is bound by residues 376–384 (IGKGAFGEV) and K399. The active-site Proton acceptor is D493. The region spanning 687–771 (RGVDWNTIRQ…SRFDYLTRKN (85 aa)) is the AGC-kinase C-terminal domain.

It belongs to the protein kinase superfamily. STE Ser/Thr protein kinase family. COT1 subfamily.

It catalyses the reaction L-seryl-[protein] + ATP = O-phospho-L-seryl-[protein] + ADP + H(+). The enzyme catalyses L-threonyl-[protein] + ATP = O-phospho-L-threonyl-[protein] + ADP + H(+). Protein kinase that seems to play a role in the regulation of cell morphogenesis and proliferation. This chain is Serine/threonine-protein kinase CBK1 (CBK1), found in Candida glabrata (strain ATCC 2001 / BCRC 20586 / JCM 3761 / NBRC 0622 / NRRL Y-65 / CBS 138) (Yeast).